The following is a 177-amino-acid chain: Anti-apoptotic protein NR13 (177 aa).

A BH1 motif is present at residues 75–94; that stretch reads LEAEGGLNWGRLLALVVFTG. A helical transmembrane segment spans residues 86–106; sequence LLALVVFTGTLAAALAESGCE. The short motif at 126 to 141 is the BH2 element; it reads EWLEEHGGWDGFCRFF. A helical membrane pass occupies residues 156–176; the sequence is SNAIMAAAGFGIAGLAFLLVV.

It belongs to the Bcl-2 family. Interacts with BAX. As to expression, expressed preferentially in heart, skeletal muscle, retina, optical tectum and bursa of Fabricius.

It localises to the cell membrane. Functionally, shows anti-apoptotic properties. Counteract the pro-apoptotic activity of BAX. The chain is Anti-apoptotic protein NR13 (NR13) from Gallus gallus (Chicken).